The chain runs to 511 residues: DEP domain-containing protein 7 (511 aa).

A DEP domain is found at 46-136 (LQTQVEVKKR…SSCSLYRFTT (91 aa)).

It belongs to the DEPDC7 family. In terms of tissue distribution, expressed in liver.

The sequence is that of DEP domain-containing protein 7 (DEPDC7) from Homo sapiens (Human).